A 368-amino-acid polypeptide reads, in one-letter code: tRNA(Met) cytidine acetate ligase (368 aa).

Residues 7–20, Gly96, Asn152, and Arg175 contribute to the ATP site; that span reads IAEF…HKYL.

Belongs to the TmcAL family.

It is found in the cytoplasm. The catalysed reaction is cytidine(34) in elongator tRNA(Met) + acetate + ATP = N(4)-acetylcytidine(34) in elongator tRNA(Met) + AMP + diphosphate. Catalyzes the formation of N(4)-acetylcytidine (ac(4)C) at the wobble position of elongator tRNA(Met), using acetate and ATP as substrates. First activates an acetate ion to form acetyladenylate (Ac-AMP) and then transfers the acetyl group to tRNA to form ac(4)C34. This is tRNA(Met) cytidine acetate ligase from Streptococcus pyogenes serotype M49 (strain NZ131).